The chain runs to 570 residues: Formate--tetrahydrofolate ligase (570 aa).

ATP is bound at residue 65 to 72 (TPFGEGKT).

The protein belongs to the formate--tetrahydrofolate ligase family.

The enzyme catalyses (6S)-5,6,7,8-tetrahydrofolate + formate + ATP = (6R)-10-formyltetrahydrofolate + ADP + phosphate. The protein operates within one-carbon metabolism; tetrahydrofolate interconversion. The chain is Formate--tetrahydrofolate ligase from Shewanella woodyi (strain ATCC 51908 / MS32).